Here is a 603-residue protein sequence, read N- to C-terminus: uncharacterized protein (603 aa).

In terms of domain architecture, PE spans 1–93 (MSFVIAAPET…AGAYASAEAA (93 aa)).

The protein belongs to the mycobacterial PE family. PGRS subfamily.

This is an uncharacterized protein from Mycobacterium tuberculosis (strain ATCC 25618 / H37Rv).